The following is a 1555-amino-acid chain: Regulating synaptic membrane exocytosis protein 2 (1555 aa).

Positions 1 to 35 (MSAPLGPRGRPAPTPAASQPPPQPEMPDLSHLTEE) are disordered. Residues 10–25 (RPAPTPAASQPPPQPE) are compositionally biased toward pro residues. The 129-residue stretch at 26–154 (MPDLSHLTEE…TKSGAWFYNS (129 aa)) folds into the RabBD domain. The FYVE-type zinc finger occupies 86 to 142 (KGDAPTCGICHKTKFADGCGHNCSYCQTKFCARCGGRVSLRSNKVMWVCNLCRKQQE). Zn(2+)-binding residues include Cys-92, Cys-95, Cys-108, Cys-111, Cys-116, Cys-119, Cys-134, and Cys-137. Polar residues predominate over residues 154–163 (SGSNTPQQPD). Residues 154–530 (SGSNTPQQPD…STPEYTSCDD (377 aa)) are disordered. Over residues 170–185 (LRSEEAPQEKKAKLHE) the composition is skewed to basic and acidic residues. A compositionally biased stretch (polar residues) spans 259–268 (YVPSDSTMPR). Basic and acidic residues-rich tracts occupy residues 287 to 298 (EPDHLNYRDSNR), 317 to 335 (RDEY…RYRS), 351 to 370 (EQMR…RHSD), and 379 to 403 (EDSR…RRAA). Ser-369 carries the phosphoserine modification. Residues 418–432 (AQGQSSYPQRTTNHS) show a composition bias toward polar residues. Basic and acidic residues predominate over residues 444–461 (DRPELRRADSLRKQHHLD). Residues 479-490 (RNDSLSSDQSES) are compositionally biased toward polar residues. Basic residues predominate over residues 497 to 506 (RPHKSKKGGK). In terms of domain architecture, PDZ spans 590–676 (DGSVPRDSGA…EPQVELVVSR (87 aa)). Phosphothreonine is present on Thr-611. The tract at residues 682–716 (PRIPDSTHAQLESSSSSFESQKMDRPSISVTSPMS) is disordered. Ser-713 and Ser-716 each carry phosphoserine. One can recognise a C2 1 domain in the interval 743 to 866 (FVPRVQIKLW…ALLDDEPHWY (124 aa)). Disordered regions lie at residues 877 to 913 (PLPH…VSDY), 935 to 1145 (STLS…KRNS), 1180 to 1207 (YRSG…DVSA), 1268 to 1288 (LEKN…TSGK), and 1307 to 1332 (KSRS…QRST). Residues 935-953 (STLSVPEQVMSSNHCSPSG) show a composition bias toward polar residues. Composition is skewed to basic and acidic residues over residues 996-1014 (RMDR…RDSH) and 1025-1071 (QTSE…ERAD). A compositionally biased stretch (low complexity) spans 1092–1114 (ALSRSHPRTGSVQTSPSSTPVTG). Ser-1106 is subject to Phosphoserine. 2 stretches are compositionally biased toward basic and acidic residues: residues 1128–1141 (TLER…DSTR) and 1180–1190 (YRSGWDPHRGA). 2 positions are modified to phosphoserine: Ser-1200 and Ser-1276. Residues 1401-1519 (AMGDIQVGMM…ELSNMVIGWF (119 aa)) enclose the C2 2 domain. 2 positions are modified to phosphoserine: Ser-1540 and Ser-1543.

In terms of assembly, heterodimer with PCLO. Part of a ternary complex involving PCLO and EPAC2. Interacts with RAB3C, RAB3D and RAB26. Binds RAB3A and RAB3B that have been activated by GTP-binding. Interacts with TSPOAP1 and RIMBP2. Interacts with PPFIA3 and PPFIA4. Interacts via its zinc finger with the first C2 domain of UNC13A. Forms a complex consisting of UNC13A, RIMS2 and RAB3A. As to expression, highly expressed in hippocampus, brain cortex, cerebellum and olfactory bulb. Detected at intermediate levels in midbrain, hindbrain and spinal cord, and at low levels in testis.

It is found in the cell membrane. The protein localises to the synapse. It localises to the presynaptic cell membrane. In terms of biological role, rab effector involved in exocytosis. May act as scaffold protein. Plays a role in dendrite formation by melanocytes. This Rattus norvegicus (Rat) protein is Regulating synaptic membrane exocytosis protein 2 (Rims2).